Consider the following 87-residue polypeptide: MKTFTLIAILTCAVLVIFHAAAAEELEVQDVIQPEDTLTGLATLDEDRLFECSFSCDIKKNGKPCKGSGEKKCSGGWRCKMNFCVKV.

The signal sequence occupies residues 1–23 (MKTFTLIAILTCAVLVIFHAAAA). Positions 24 to 48 (EELEVQDVIQPEDTLTGLATLDEDR) are excised as a propeptide.

Belongs to the neurotoxin 12 (Hwtx-2) family. 03 (juruin) subfamily. Contains 3 disulfide bonds. Two different connectivities are observed in similar proteins (C1-C3, C2-C5, C4-C6 or C1-C4, C2-C5, C3-C6). In terms of tissue distribution, expressed by the venom gland.

Its subcellular location is the secreted. Functionally, this toxin causes paralysis and death to sheep blowflies. It may inhibit voltage-gated calcium channels. In Coremiocnemis tropix (Australian tarantula spider), this protein is U1-theraphotoxin-Ct1a.